Reading from the N-terminus, the 353-residue chain is Melatonin receptor type 1A (353 aa).

Over 1–32 (MKGNVSELLNATQQAPGGGEGGRPRPSWLAST) the chain is Extracellular. N-linked (GlcNAc...) asparagine glycosylation is found at N4 and N10. Residues 33–53 (LAFILIFTIVVDILGNLLVIL) form a helical membrane-spanning segment. The Cytoplasmic segment spans residues 54-66 (SVYRNKKLRNSGN). The chain crosses the membrane as a helical span at residues 67–87 (IFVVSLAVADLVVAVYPYPLV). The Extracellular segment spans residues 88-105 (LTSILNNGWNLGYLHCQV). The cysteines at positions 103 and 180 are disulfide-linked. Residues 106-126 (SAFLMGLSVIGSIFNITGIAM) form a helical membrane-spanning segment. Residues 127–145 (NRYCYICHSLKYDKIYSNK) lie on the Cytoplasmic side of the membrane. The chain crosses the membrane as a helical span at residues 146 to 166 (NSLCYVFLIWMLTLIAIMPNL). The Extracellular segment spans residues 167–190 (QTGTLQYDPRIYSCTFTQSVSSAY). Residues 191–211 (TIAVVVFHFIVPMIIVIFCYL) form a helical membrane-spanning segment. Over 212 to 243 (RIWVLVLQVRRRVKPDNKPKLKPQDFRNFVTM) the chain is Cytoplasmic. Residues 244-264 (FVVFVLFAICWAPLNLIGLIV) form a helical membrane-spanning segment. Topologically, residues 265–277 (ASDPATMVPRIPE) are extracellular. The helical transmembrane segment at 278–298 (WLFVASYYLAYFNSCLNAIIY) threads the bilayer. Topologically, residues 299–353 (GLLNQNFRKEYKKIIVSLCTAKMFFVESSNEEADKIKCKPSPLIPNNNLIKVDSV) are cytoplasmic.

The protein belongs to the G-protein coupled receptor 1 family.

It localises to the cell membrane. In terms of biological role, high affinity receptor for melatonin. Likely to mediate the reproductive and circadian actions of melatonin. The activity of this receptor is mediated by pertussis toxin sensitive G proteins that inhibit adenylate cyclase activity. Possibly involved in sleep induction, by melatonin activation of the potassium channel KCNMA1/BK and the dissociation of G-beta and G-gamma subunits, thereby decreasing synaptic transmission. In Mus musculus (Mouse), this protein is Melatonin receptor type 1A (Mtnr1a).